Consider the following 391-residue polypeptide: Paired box protein Pax-5 (391 aa).

The segment at 1-21 is disordered; the sequence is MDLEKNYPTPRTSRTGHGGVN. The paired DNA-binding region spans 16-142; it reads GHGGVNQLGG…SSINRIIRTK (127 aa). The PAI subdomain stretch occupies residues 19 to 75; that stretch reads GVNQLGGVFVNGRPLPDVVRQRIVELAHQGVRPCDISRQLRVSHGCVSKILGRYYET. The segment at 94–142 is RED subdomain; the sequence is KVVEKIAEYKRQNPTMFAWEIRDRLLAERVCDNDTVPSVSSINRIIRTK. Residues 182–218 form a disordered region; the sequence is SGILGITSPSADTNKRKRDEGIQESPVPNGHSLPGRD.

As to quaternary structure, interacts with ETS1; this interaction alters PAX5 DNA-binding properties. Binds DNA as a monomer. Interacts with TBP; this interaction allows PAX5 to interact with the basal transcription machinery. Interacts with RB1. Interacts with TLE4. Interacts with DAXX. In terms of assembly, (Microbial infection) Interacts (via N-terminus) with Epstein-Barr virus protein BZLF1 (via C-terminus); this interaction inhibits BZLF1-mediated lytic viral reactivation. Interacts also with EBNA1; this interaction promotes EBNA1-dependent transcription. Post-translationally, O-glycosylated. Phosphorylated by SYK. This phosphorylation plays an important role in the abolition of BLIMP1 repression by PAX5 in order to trigger plasma cell differentiation.

It localises to the nucleus. Its function is as follows. Transcription factor that plays an essential role in commitment of lymphoid progenitors to the B-lymphocyte lineage. Fulfills a dual role by repressing B-lineage inappropriate genes and simultaneously activating B-lineage-specific genes. In turn, regulates cell adhesion and migration, induces V(H)-to-D(H)J(H) recombination, facilitates pre-B-cell receptor signaling and promotes development to the mature B-cell stage. Repression of the cohesin-release factor WAPL causes global changes of the chromosomal architecture in pro-B cells to facilitate the generation of a diverse antibody repertoire. In terms of biological role, (Microbial infection) Plays an essential role in the maintenance of Epstein-Barr virus genome copy number within the host cell by promoting EBNA1/oriP-dependent binding and transcription. Also participates in the inhibition of lytic EBV reactivation by modulating viral BZLF1 activity. The sequence is that of Paired box protein Pax-5 (PAX5) from Homo sapiens (Human).